The following is a 477-amino-acid chain: MSKVLTSLPVGQRVGIAFSGGLDTSVAVAWMRDKGAIPCTYTADIGQYDEPDVSGVPARAREYGAEIARVVDCRAQLVEEGLAALACGAFHIRSGGRIYFNTTPLGRAVTGTILVRAMHEDGVDIWGDGSTFKGNDIERFYRYGLLANPQLRIYKPWLDPDFVHELGGRTEMSQWLTSHGLPYRDSQEKAYSTDANIWGATHEAKTLEHLDTSLEVVTPIMGVRFWDPAVDIATEDVTVAFEQGRPVALNGRRFDDPVELVEEANAIGGRHGLGMSDQIENRIIEAKSRGVYEAPGMALLWLTYERLMNAIHNEDTLANYQISGRRLGRLLYEGRWLDPQALMLRESIQRWVASVVTGEVTVRLRRGEDYTIVRTEGPALSYHPEKLSMERTSNSAFGPTDRIGQLTMRNLDIADSRAMLEMYAGQPLDQGQVLVENGTLFGELPSGGFDQITENPEVQAEPEEEALDAAAMEAGTD.

ATP contacts are provided by residues 17-25 (AFSGGLDTS) and A43. Y99 contacts L-citrulline. 2 residues coordinate ATP: G129 and T131. L-aspartate is bound by residues T131, N135, and D136. N135 is an L-citrulline binding site. An ATP-binding site is contributed by D136. The L-citrulline site is built by R139 and S192. Residue D194 coordinates ATP. L-citrulline contacts are provided by T201, E203, and E280. The interval 450–477 (DQITENPEVQAEPEEEALDAAAMEAGTD) is disordered. Low complexity predominate over residues 468–477 (DAAAMEAGTD).

This sequence belongs to the argininosuccinate synthase family. Type 2 subfamily. As to quaternary structure, homotetramer.

It localises to the cytoplasm. It carries out the reaction L-citrulline + L-aspartate + ATP = 2-(N(omega)-L-arginino)succinate + AMP + diphosphate + H(+). The protein operates within amino-acid biosynthesis; L-arginine biosynthesis; L-arginine from L-ornithine and carbamoyl phosphate: step 2/3. The chain is Argininosuccinate synthase from Nocardioides sp. (strain ATCC BAA-499 / JS614).